A 134-amino-acid chain; its full sequence is Protein NrdI (134 aa).

The protein belongs to the NrdI family.

Its function is as follows. Probably involved in ribonucleotide reductase function. This chain is Protein NrdI, found in Chromohalobacter salexigens (strain ATCC BAA-138 / DSM 3043 / CIP 106854 / NCIMB 13768 / 1H11).